A 353-amino-acid chain; its full sequence is Photosystem II protein D1 (353 aa).

An N-acetylthreonine modification is found at Thr2. Thr2 bears the Phosphothreonine mark. The next 3 membrane-spanning stretches (helical) occupy residues 29–46, 118–133, and 142–156; these read YIGW…TATS, HFLL…EWEL, and WIAV…AATA. His118 is a chlorophyll a binding site. Tyr126 serves as a coordination point for pheophytin a. The [CaMn4O5] cluster site is built by Asp170 and Glu189. A helical membrane pass occupies residues 197 to 218; that stretch reads FHMLGVAGVFGGSLFSAMHGSL. Residue His198 participates in chlorophyll a binding. A quinone-binding positions include His215 and 264–265; that span reads SF. His215 lines the Fe cation pocket. His272 contributes to the Fe cation binding site. The helical transmembrane segment at 274–288 threads the bilayer; that stretch reads FLAAWPVIGIWFTSL. His332, Glu333, Asp342, and Ala344 together coordinate [CaMn4O5] cluster. Residues 345-353 constitute a propeptide that is removed on maturation; sequence AVEAPSTIG.

This sequence belongs to the reaction center PufL/M/PsbA/D family. In terms of assembly, PSII is composed of 1 copy each of membrane proteins PsbA, PsbB, PsbC, PsbD, PsbE, PsbF, PsbH, PsbI, PsbJ, PsbK, PsbL, PsbM, PsbT, PsbX, PsbY, PsbZ, Psb30/Ycf12, at least 3 peripheral proteins of the oxygen-evolving complex and a large number of cofactors. It forms dimeric complexes. The cofactor is The D1/D2 heterodimer binds P680, chlorophylls that are the primary electron donor of PSII, and subsequent electron acceptors. It shares a non-heme iron and each subunit binds pheophytin, quinone, additional chlorophylls, carotenoids and lipids. D1 provides most of the ligands for the Mn4-Ca-O5 cluster of the oxygen-evolving complex (OEC). There is also a Cl(-1) ion associated with D1 and D2, which is required for oxygen evolution. The PSII complex binds additional chlorophylls, carotenoids and specific lipids.. Tyr-161 forms a radical intermediate that is referred to as redox-active TyrZ, YZ or Y-Z. In terms of processing, C-terminally processed by CTPA; processing is essential to allow assembly of the oxygen-evolving complex and thus photosynthetic growth.

Its subcellular location is the plastid. It is found in the chloroplast thylakoid membrane. It carries out the reaction 2 a plastoquinone + 4 hnu + 2 H2O = 2 a plastoquinol + O2. Photosystem II (PSII) is a light-driven water:plastoquinone oxidoreductase that uses light energy to abstract electrons from H(2)O, generating O(2) and a proton gradient subsequently used for ATP formation. It consists of a core antenna complex that captures photons, and an electron transfer chain that converts photonic excitation into a charge separation. The D1/D2 (PsbA/PsbD) reaction center heterodimer binds P680, the primary electron donor of PSII as well as several subsequent electron acceptors. This is Photosystem II protein D1 from Landoltia punctata (Dotted duckmeat).